A 334-amino-acid chain; its full sequence is Probable fructose-bisphosphate aldolase class 1 (334 aa).

The protein belongs to the class I fructose-bisphosphate aldolase family.

It catalyses the reaction beta-D-fructose 1,6-bisphosphate = D-glyceraldehyde 3-phosphate + dihydroxyacetone phosphate. It participates in carbohydrate degradation; glycolysis; D-glyceraldehyde 3-phosphate and glycerone phosphate from D-glucose: step 4/4. This is Probable fructose-bisphosphate aldolase class 1 from Xylella fastidiosa (strain Temecula1 / ATCC 700964).